A 404-amino-acid chain; its full sequence is Cysteine desulfurase IscS (404 aa).

Pyridoxal 5'-phosphate contacts are provided by residues 75 to 76 (AT), Asn155, Gln183, and 203 to 205 (SAH). Residue Lys206 is modified to N6-(pyridoxal phosphate)lysine. Thr243 provides a ligand contact to pyridoxal 5'-phosphate. The active-site Cysteine persulfide intermediate is the Cys328. Residue Cys328 participates in [2Fe-2S] cluster binding.

This sequence belongs to the class-V pyridoxal-phosphate-dependent aminotransferase family. NifS/IscS subfamily. As to quaternary structure, homodimer. Forms a heterotetramer with IscU, interacts with other sulfur acceptors. Pyridoxal 5'-phosphate serves as cofactor.

Its subcellular location is the cytoplasm. It catalyses the reaction (sulfur carrier)-H + L-cysteine = (sulfur carrier)-SH + L-alanine. The protein operates within cofactor biosynthesis; iron-sulfur cluster biosynthesis. Functionally, master enzyme that delivers sulfur to a number of partners involved in Fe-S cluster assembly, tRNA modification or cofactor biosynthesis. Catalyzes the removal of elemental sulfur atoms from cysteine to produce alanine. Functions as a sulfur delivery protein for Fe-S cluster synthesis onto IscU, an Fe-S scaffold assembly protein, as well as other S acceptor proteins. This is Cysteine desulfurase IscS from Ruthia magnifica subsp. Calyptogena magnifica.